Here is a 429-residue protein sequence, read N- to C-terminus: Glutamate-1-semialdehyde 2,1-aminomutase (429 aa).

Residue Lys-267 is modified to N6-(pyridoxal phosphate)lysine.

Belongs to the class-III pyridoxal-phosphate-dependent aminotransferase family. HemL subfamily. As to quaternary structure, homodimer. Requires pyridoxal 5'-phosphate as cofactor.

It localises to the cytoplasm. It catalyses the reaction (S)-4-amino-5-oxopentanoate = 5-aminolevulinate. The protein operates within porphyrin-containing compound metabolism; protoporphyrin-IX biosynthesis; 5-aminolevulinate from L-glutamyl-tRNA(Glu): step 2/2. The chain is Glutamate-1-semialdehyde 2,1-aminomutase from Stenotrophomonas maltophilia (strain R551-3).